The sequence spans 148 residues: Probable TtuB-protein conjugate cleaving protease (148 aa).

An MPN domain is found at 22–148; it reads HGLVLYVPRG…EGQEVALVVL (127 aa). The active-site Proton donor/acceptor is the Glu-47. Zn(2+) contacts are provided by His-101, His-103, and Asp-114. The JAMM motif motif lies at 101–114; that stretch reads HSHPKGPALPSPRD.

This sequence belongs to the peptidase M67B family. The cofactor is Zn(2+).

Functionally, probable metalloprotease that cleaves the ubiquitin-like modifier protein TtuB from protein conjugates, hydrolyzing the isopeptide bond between a lysine residue of the target protein and the C-terminal glycine of the modifier protein. Does not seem to work for all the TtuB conjugates. This chain is Probable TtuB-protein conjugate cleaving protease, found in Thermus thermophilus (strain ATCC BAA-163 / DSM 7039 / HB27).